The sequence spans 598 residues: Nuclear receptor subfamily 4 group A member 1 (598 aa).

2 disordered regions span residues Met-1 to Ala-43 and Gly-128 to Leu-151. Residues Ser-134–Ser-145 show a composition bias toward low complexity. Residues Arg-171–Ser-466 are required for nuclear import. Residues Glu-264–Thr-339 constitute a DNA-binding region (nuclear receptor). 2 NR C4-type zinc fingers span residues Cys-267–Cys-287 and Cys-303–Cys-327. The tract at residues Ala-268–Lys-354 is required for binding NBRE-containing DNA. The tract at residues Ala-299–Pro-361 is required for the interaction with RXRA. Residue Ser-341 is modified to Phosphoserine; by PKA. A disordered region spans residues Ser-341–Pro-361. Ser-351 is modified (phosphoserine; by PKA, RPS6KA1 and RPS6KA3). Residues Ser-360–Thr-595 enclose the NR LBD domain. The interval Pro-521 to Gly-544 is binds lipopolysaccharide. Residues Pro-584–Thr-595 form an AF-2 region.

It belongs to the nuclear hormone receptor family. NR4 subfamily. Binds the NGFI-B response element (NBRE) as a monomer. Binds the Nur response element (NurRE), consisting of two inverse NBRE-related octanucleotide repeats separated by 6 base-pairs, as a dimer. Interacts (via N-terminus) with NLRP3 (via LRR repeat domain); the interaction is direct, requires binding of NR4A1/Nur77 to NBRE-containing dsDNA and lipopolysaccharide, and leads to non-canonical NLRP3 inflammasome activation. Interacts with GADD45GIP1. Interacts with STK11. Interacts with IFI27. Heterodimer (via DNA-binding domain) with RXRA (via C-terminus); DNA-binding of the heterodimer is enhanced by 9-cis retinoic acid. Competes for the RXRA interaction with EP300 and thereby attenuates EP300 mediated acetylation of RXRA. Interacts with NCOA1. Interacts with NCOA2. Interacts with NCOA3. Zn(2+) serves as cofactor. Post-translationally, phosphorylated at Ser-351 by RPS6KA1 and RPS6KA3 in response to mitogenic or stress stimuli. In terms of processing, acetylated by p300/CBP, acetylation increases stability. Deacetylated by HDAC1.

It is found in the nucleus. The protein localises to the cytoplasm. Its subcellular location is the cytosol. It localises to the mitochondrion. Functionally, orphan nuclear receptor. Binds the NGFI-B response element (NBRE) 5'-AAAGGTCA-3'. Binds 9-cis-retinoic acid outside of its ligand-binding (NR LBD) domain. Participates in energy homeostasis by sequestrating the kinase STK11 in the nucleus, thereby attenuating cytoplasmic AMPK activation. Regulates the inflammatory response in macrophages by regulating metabolic adaptations during inflammation, including repressing the transcription of genes involved in the citric acid cycle (TCA). Inhibits NF-kappa-B signaling by binding to low-affinity NF-kappa-B binding sites, such as at the IL2 promoter. May act concomitantly with NR4A2 in regulating the expression of delayed-early genes during liver regeneration. Plays a role in the vascular response to injury. In terms of biological role, in the cytosol, upon its detection of both bacterial lipopolysaccharide (LPS) and NBRE-containing mitochondrial DNA released by GSDMD pores during pyroptosis, it promotes non-canonical NLRP3 inflammasome activation by stimulating association of NLRP3 and NEK7. The chain is Nuclear receptor subfamily 4 group A member 1 (NR4A1) from Bos taurus (Bovine).